Consider the following 340-residue polypeptide: COP9 signalosome complex subunit 5 (340 aa).

The MPN domain maps to 52–189 (VRISATALIK…IGAFRTYPAD (138 aa)). The Zn(2+) site is built by His135, His137, and Asp148. Residues 135–148 (HSHPGYGCWLSGID) carry the JAMM motif motif.

The protein belongs to the peptidase M67A family. CSN5 subfamily. In terms of assembly, component of the COP9 signalosome (CSN) complex.

The protein localises to the cytoplasm. It is found in the nucleus. Functionally, catalytic Component of the COP9 signalosome (CSN) complex that acts as an regulator of the ubiquitin (Ubl) conjugation pathway by mediating the deneddylation of the cullin subunit of SCF-type E3 ubiquitin-protein ligase complexes. This is COP9 signalosome complex subunit 5 (RRI1) from Gibberella zeae (strain ATCC MYA-4620 / CBS 123657 / FGSC 9075 / NRRL 31084 / PH-1) (Wheat head blight fungus).